Consider the following 294-residue polypeptide: Nucleotide-binding protein CLD_1131 (294 aa).

8–15 serves as a coordination point for ATP; that stretch reads GLSGAGKT. Residue 59-62 coordinates GTP; that stretch reads DIRG.

This sequence belongs to the RapZ-like family.

Functionally, displays ATPase and GTPase activities. In Clostridium botulinum (strain Okra / Type B1), this protein is Nucleotide-binding protein CLD_1131.